The chain runs to 1372 residues: DNA-directed RNA polymerase subunit beta' (1372 aa).

4 residues coordinate Zn(2+): Cys-69, Cys-71, Cys-84, and Cys-87. Residues Asp-460, Asp-462, and Asp-464 each contribute to the Mg(2+) site. Cys-808, Cys-882, Cys-889, and Cys-892 together coordinate Zn(2+).

It belongs to the RNA polymerase beta' chain family. In terms of assembly, the RNAP catalytic core consists of 2 alpha, 1 beta, 1 beta' and 1 omega subunit. When a sigma factor is associated with the core the holoenzyme is formed, which can initiate transcription. Mg(2+) serves as cofactor. It depends on Zn(2+) as a cofactor.

It carries out the reaction RNA(n) + a ribonucleoside 5'-triphosphate = RNA(n+1) + diphosphate. Its function is as follows. DNA-dependent RNA polymerase catalyzes the transcription of DNA into RNA using the four ribonucleoside triphosphates as substrates. The sequence is that of DNA-directed RNA polymerase subunit beta' from Rickettsia akari (strain Hartford).